Reading from the N-terminus, the 870-residue chain is DNA-directed RNA polymerase subunit Rpo1N (870 aa).

The Zn(2+) site is built by Cys60, Cys63, Cys70, His73, Cys100, Cys103, Cys146, and Cys149. Mg(2+) contacts are provided by Asp451, Asp453, and Asp455.

This sequence belongs to the RNA polymerase beta' chain family. As to quaternary structure, part of the RNA polymerase complex. Mg(2+) serves as cofactor. Zn(2+) is required as a cofactor.

Its subcellular location is the cytoplasm. It catalyses the reaction RNA(n) + a ribonucleoside 5'-triphosphate = RNA(n+1) + diphosphate. Functionally, DNA-dependent RNA polymerase (RNAP) catalyzes the transcription of DNA into RNA using the four ribonucleoside triphosphates as substrates. Forms the clamp head domain. The polypeptide is DNA-directed RNA polymerase subunit Rpo1N (Methanothermobacter thermautotrophicus (strain ATCC 29096 / DSM 1053 / JCM 10044 / NBRC 100330 / Delta H) (Methanobacterium thermoautotrophicum)).